The primary structure comprises 310 residues: Ceramide synthase LOH1 (310 aa).

The next 6 helical transmembrane spans lie at 16–36 (SFPT…FPTI), 85–105 (CIYY…EPWF), 131–151 (FLYM…VFWE), 157–177 (FGVS…SYIC), 216–236 (FVLF…FWIL), and 260–280 (YMFN…WVLI). Positions 76–289 (RKFKESAWKC…IYRMLVKQVQ (214 aa)) constitute a TLC domain. 2 positions are modified to phosphoserine: serine 300 and serine 302.

Expressed ubiquitously at high levels. Not observed in pollen.

The protein resides in the endoplasmic reticulum membrane. It catalyses the reaction (4R)-hydroxysphinganine + a fatty acyl-CoA = an N-acyl-(4R)-4-hydroxysphinganine + CoA + H(+). The catalysed reaction is hexacosanoyl-CoA + (4R)-hydroxysphinganine = N-hexacosanoyl-(4R)-hydroxysphinganine + CoA + H(+). It carries out the reaction tetracosanoyl-CoA + (4R)-hydroxysphinganine = N-tetracosanoyl-(4R)-hydroxysphinganine + CoA + H(+). Its pathway is sphingolipid metabolism. With respect to regulation, inhibited by the mycotoxin fumonisin B(1), a sphingosine analog mycotoxins produced by pathogenic fungi. Repressed by divalent cation such as magnesium Mg(2+), copper Cu(2+), zinc Zn(2+), manganese Mn(2+), calcium Ca(2+) and cobalt Co(2+). Essential for plant growth, promotes cell division in root meristems. Catalyzes the biosynthesis of ceramide sphingolipids with C(16) to C(28) fatty acids, structural membrane lipids involved in membrane trafficking (e.g. early endosomes) and cell polarity (e.g. polar auxin transport related proteins); mostly active with t18:0 and saturated very long saturated fatty acids (C24:0 and C26:0), such as long-chain base (LCB) phytosphingosine (t18:0), lignoceroyl- and hexacosanoyl-CoAs. Mediates resistance to sphinganine-analog mycotoxins (SAMs, e.g. fumonisin B(1)) by restoring the sphingolipid biosynthesis. Could salvage the transport of GPI-anchored proteins from the endoplasmic reticulum to the Golgi apparatus in ceramides-depleted cells after SAM exposure. May prevent precocious cell death by delaying PR1 accumulation during aging. Contributes to hypoxic conditions tolerance (e.g. submergences), especially in the dark, by promoting the formation of very-long-chain (VLC) ceramide species (22:1, 24:1 and 26:1) and of VLC unsaturated ceramides, which are modulating CTR1-mediated ethylene signaling leading to endoplasmic reticulum (ER)-to-nucleus translocation of EIN2 and EIN3. The protein is Ceramide synthase LOH1 of Arabidopsis thaliana (Mouse-ear cress).